Here is a 688-residue protein sequence, read N- to C-terminus: Protein sel-1 homolog 2 (688 aa).

The signal sequence occupies residues Met-1 to Ala-23. Residues Glu-24–Thr-662 are Extracellular-facing. The N-linked (GlcNAc...) asparagine glycan is linked to Asn-34. 11 Sel1-like repeats span residues Gly-107 to Asn-142, Leu-143 to Ser-178, Cys-179 to Asn-214, Met-215 to Ala-250, Val-297 to Ser-333, Ala-334 to Asn-370, Ala-371 to Trp-406, Pro-407 to Gln-442, Pro-443 to His-478, Ala-551 to His-586, and Ala-588 to Pro-623. Residues Ile-663–Leu-683 form a helical membrane-spanning segment. The Cytoplasmic segment spans residues Arg-684 to Gly-688.

This sequence belongs to the sel-1 family.

The protein localises to the membrane. The protein resides in the cell projection. Its subcellular location is the cilium. It is found in the nucleus speckle. The protein is Protein sel-1 homolog 2 (SEL1L2) of Homo sapiens (Human).